A 631-amino-acid chain; its full sequence is MGIQILPPQLANQIAAGEVVERPASVVKELVENSLDAGASRIDIEIDKGGSKLIKIRDNGSGIPKEELALALSRHATSKLHSLDDLEAILSFGFRGEALASISSVSRLTLTSRTAEQSEAWQAYAEGVEMAVKVMPAAHPVGSTIEVVDLFFNTPARRRFLKSDKTEFTHIDEWLKRIALVRGDIHFTLTHNGKTVRNYRPAMNEPQYLQRLTQVAGRPFADEALRVECQHDDLRLSGYLQSPWSTVLTDTHYFYVNGRLVRDRLVNHAVRQAFAQKAEVEQPGYVLMLDIDPHQVDVNVHPAKHEVRFHQSRYVHDYILQALQSALEEAGELRFEPHSPQIDDSSPYVKPETESSAFELQSTESNAKYLGIDTTGERQAEARVVEYRSSDMPKMRTGTAVQSNAFGSMSVPRETRSGSSGESRPRAELPSKTAIASYGALLQTPSYSVQDKAYQPTLPMPSILDGQFWVFTDGPKLSLLRIESVALATRSDEIETKLATGLIGQPLLMPVSVAADTDWSSLLDEHATLIRQLGLELTIRYQQLIIKKVPPYLRDCQLARVIPEWLQSLRFEAPAPNALAIWLAEQSLTGFISAPDVWVAYCQLTEEKRQQIASKAVSLPWQSWLEEQAIE.

Disordered regions lie at residues 337–362 (PHSP…ELQS) and 400–429 (AVQS…RAEL).

This sequence belongs to the DNA mismatch repair MutL/HexB family.

This protein is involved in the repair of mismatches in DNA. It is required for dam-dependent methyl-directed DNA mismatch repair. May act as a 'molecular matchmaker', a protein that promotes the formation of a stable complex between two or more DNA-binding proteins in an ATP-dependent manner without itself being part of a final effector complex. In Shewanella oneidensis (strain ATCC 700550 / JCM 31522 / CIP 106686 / LMG 19005 / NCIMB 14063 / MR-1), this protein is DNA mismatch repair protein MutL.